A 956-amino-acid chain; its full sequence is MAM domain-containing glycosylphosphatidylinositol anchor protein 1 (956 aa).

The signal sequence occupies residues 1–18; sequence MEVTCLLLLALIPFHCRG. 2 Ig-like domains span residues 24 to 123 and 132 to 230; these read PAQA…KSIR and PVLT…KSIT. The N-linked (GlcNAc...) asparagine glycan is linked to asparagine 42. Intrachain disulfides connect cysteine 60–cysteine 108 and cysteine 157–cysteine 214. 3 N-linked (GlcNAc...) asparagine glycosylation sites follow: asparagine 235, asparagine 257, and asparagine 307. Ig-like domains are found at residues 240–323, 338–432, 440–534, and 539–632; these read PTLK…KTVN, PDMI…VEVN, PTIS…VQLT, and PEVE…FQVS. 4 disulfides stabilise this stretch: cysteine 262-cysteine 308, cysteine 357-cysteine 415, cysteine 463-cysteine 514, and cysteine 560-cysteine 616. The Fibronectin type-III domain maps to 644–744; that stretch reads TPNPTRSHKL…SRVIHYTEPI (101 aa). Residues 752–919 enclose the MAM domain; it reads NTCHFEDEKI…VTLKKGECPR (168 aa). Residues 780-789 are compositionally biased toward polar residues; sequence LTQNPKRSPN. The disordered stretch occupies residues 780-799; sequence LTQNPKRSPNTGPPTDISGT. The GPI-anchor amidated serine moiety is linked to residue serine 933. A propeptide spans 934-956 (removed in mature form); sequence GAPRLSSLQLWGSMTIFLLALQR.

As to quaternary structure, interacts heterophilically through its MAM domain with proteins in axon-rich regions and through its Ig-like domains with proteins in differentiating muscle. Interacts (through the Ig-like domains) with NLGN2. As to expression, high levels detected in developing central and peripheral nervous systems with little expression elsewhere. In brain, highest levels in cerebral cortex and hindbrain at E15. At postnatal day 1, highest levels in basilar pons and superficial layers of the neocortex. In the developing spinal cord, restricted to a subpopulation of neurons in the dorsal and spinal ventral cord, probably D1 interneurons. Expressed in brain.

The protein localises to the cell membrane. Its function is as follows. Required for radial migration of cortical neurons in the superficial layer of the neocortex. Plays a role in the formation or maintenance of inhibitory synapses. May function by inhibiting the activity of NLGN2. In Rattus norvegicus (Rat), this protein is MAM domain-containing glycosylphosphatidylinositol anchor protein 1 (Mdga1).